A 441-amino-acid polypeptide reads, in one-letter code: Tubulin beta chain (441 aa).

GTP is bound by residues Gln11, Glu69, Ser138, Gly142, Thr143, Gly144, Asn204, and Asn226. Position 69 (Glu69) interacts with Mg(2+).

It belongs to the tubulin family. In terms of assembly, dimer of alpha and beta chains. A typical microtubule is a hollow water-filled tube with an outer diameter of 25 nm and an inner diameter of 15 nM. Alpha-beta heterodimers associate head-to-tail to form protofilaments running lengthwise along the microtubule wall with the beta-tubulin subunit facing the microtubule plus end conferring a structural polarity. Microtubules usually have 13 protofilaments but different protofilament numbers can be found in some organisms and specialized cells. It depends on Mg(2+) as a cofactor.

It is found in the cytoplasm. It localises to the cytoskeleton. In terms of biological role, tubulin is the major constituent of microtubules, a cylinder consisting of laterally associated linear protofilaments composed of alpha- and beta-tubulin heterodimers. Microtubules grow by the addition of GTP-tubulin dimers to the microtubule end, where a stabilizing cap forms. Below the cap, tubulin dimers are in GDP-bound state, owing to GTPase activity of alpha-tubulin. The chain is Tubulin beta chain from Babesia bovis.